A 192-amino-acid chain; its full sequence is Glycerol-3-phosphate acyltransferase (192 aa).

5 helical membrane-spanning segments follow: residues 4-24 (FAII…DVVI), 48-68 (LVLV…WVGY), 74-94 (YFEL…PIFF), 101-121 (GVAT…GSML), and 125-145 (LLIF…ALIL).

The protein belongs to the PlsY family. As to quaternary structure, probably interacts with PlsX.

It is found in the cell inner membrane. It carries out the reaction an acyl phosphate + sn-glycerol 3-phosphate = a 1-acyl-sn-glycero-3-phosphate + phosphate. It functions in the pathway lipid metabolism; phospholipid metabolism. Its function is as follows. Catalyzes the transfer of an acyl group from acyl-phosphate (acyl-PO(4)) to glycerol-3-phosphate (G3P) to form lysophosphatidic acid (LPA). This enzyme utilizes acyl-phosphate as fatty acyl donor, but not acyl-CoA or acyl-ACP. This chain is Glycerol-3-phosphate acyltransferase, found in Histophilus somni (strain 129Pt) (Haemophilus somnus).